Reading from the N-terminus, the 101-residue chain is Small ribosomal subunit protein uS14 (101 aa).

Belongs to the universal ribosomal protein uS14 family. As to quaternary structure, part of the 30S ribosomal subunit. Contacts proteins S3 and S10.

Functionally, binds 16S rRNA, required for the assembly of 30S particles and may also be responsible for determining the conformation of the 16S rRNA at the A site. The polypeptide is Small ribosomal subunit protein uS14 (Marinobacter nauticus (strain ATCC 700491 / DSM 11845 / VT8) (Marinobacter aquaeolei)).